The primary structure comprises 137 residues: Nucleoside diphosphate kinase (137 aa).

ATP-binding residues include lysine 9, phenylalanine 57, arginine 85, threonine 91, arginine 102, and asparagine 112. Catalysis depends on histidine 115, which acts as the Pros-phosphohistidine intermediate.

The protein belongs to the NDK family. In terms of assembly, homotetramer. Mg(2+) serves as cofactor.

The protein localises to the cytoplasm. The catalysed reaction is a 2'-deoxyribonucleoside 5'-diphosphate + ATP = a 2'-deoxyribonucleoside 5'-triphosphate + ADP. It catalyses the reaction a ribonucleoside 5'-diphosphate + ATP = a ribonucleoside 5'-triphosphate + ADP. Major role in the synthesis of nucleoside triphosphates other than ATP. The ATP gamma phosphate is transferred to the NDP beta phosphate via a ping-pong mechanism, using a phosphorylated active-site intermediate. This Campylobacter jejuni subsp. jejuni serotype O:6 (strain 81116 / NCTC 11828) protein is Nucleoside diphosphate kinase.